The sequence spans 30 residues: Kalata-B17 (30 aa).

Residues 1 to 30 (GIPCAESCVYIPCTITALLGCKCKDQVCYN) constitute a cross-link (cyclopeptide (Gly-Asn)). 3 cysteine pairs are disulfide-bonded: Cys4–Cys21, Cys8–Cys23, and Cys13–Cys28.

Post-translationally, this is a cyclic peptide.

Its function is as follows. Probably participates in a plant defense mechanism. The chain is Kalata-B17 from Oldenlandia affinis.